Here is a 171-residue protein sequence, read N- to C-terminus: Tetratricopeptide repeat protein 9C (171 aa).

3 TPR repeats span residues A8–L41, T72–N107, and A108–D141.

It belongs to the TTC9 family.

The sequence is that of Tetratricopeptide repeat protein 9C (TTC9C) from Homo sapiens (Human).